Consider the following 307-residue polypeptide: GTPase Era (307 aa).

The 168-residue stretch at 13–180 (RCGFVALIGA…RRALAEMVPP (168 aa)) folds into the Era-type G domain. Residues 21–28 (GAPNVGKS) form a G1 region. Position 21–28 (21–28 (GAPNVGKS)) interacts with GTP. The G2 stretch occupies residues 47–51 (QTTRA). The segment at 68–71 (DTPG) is G3. GTP is bound by residues 68-72 (DTPGI) and 130-133 (NKVD). Residues 130-133 (NKVD) are G4. The tract at residues 159 to 161 (ISA) is G5. Residues 211 to 288 (LHQELPYQST…HLFLFVKVRE (78 aa)) enclose the KH type-2 domain.

This sequence belongs to the TRAFAC class TrmE-Era-EngA-EngB-Septin-like GTPase superfamily. Era GTPase family. As to quaternary structure, monomer.

Its subcellular location is the cytoplasm. The protein localises to the cell inner membrane. In terms of biological role, an essential GTPase that binds both GDP and GTP, with rapid nucleotide exchange. Plays a role in 16S rRNA processing and 30S ribosomal subunit biogenesis and possibly also in cell cycle regulation and energy metabolism. This chain is GTPase Era, found in Bradyrhizobium sp. (strain ORS 278).